The sequence spans 161 residues: MDQQPGPVQQSSPPNLTNPRFTLELEFVSSLANPYYLSHLAVTYPNLLGISKSGDEGETSNESSDPEAKAFAAYLAYLYSYWKTPEYAQFLTHPGATLRALRLLQEETFRRDIIRPQVIEALAGTGVDEQGAQDTQEGEGEQKQNKEEDAQDAQENTESKT.

The interval 124–161 (GTGVDEQGAQDTQEGEGEQKQNKEEDAQDAQENTESKT) is disordered.

Belongs to the Mediator complex subunit 31 family. Component of the Mediator complex.

The protein localises to the nucleus. In terms of biological role, component of the Mediator complex, a coactivator involved in the regulated transcription of nearly all RNA polymerase II-dependent genes. Mediator functions as a bridge to convey information from gene-specific regulatory proteins to the basal RNA polymerase II transcription machinery. Mediator is recruited to promoters by direct interactions with regulatory proteins and serves as a scaffold for the assembly of a functional preinitiation complex with RNA polymerase II and the general transcription factors. This chain is Mediator of RNA polymerase II transcription subunit 31 (soh1), found in Aspergillus clavatus (strain ATCC 1007 / CBS 513.65 / DSM 816 / NCTC 3887 / NRRL 1 / QM 1276 / 107).